The following is a 257-amino-acid chain: DNA-binding and peroxide stress resistance protein YaaA (257 aa).

The Helix-hairpin-helix motif lies at 35-66; the sequence is IGIARKLSAPQIGKLMSISDKLADLNATRFHD.

This sequence belongs to the UPF0246 family.

Its subcellular location is the cytoplasm. Its function is as follows. Protects bacteria from neutrophil-related defense upon infection of mammals. Binds DNA. The chain is DNA-binding and peroxide stress resistance protein YaaA from Klebsiella pneumoniae subsp. pneumoniae (strain HS11286).